The following is a 272-amino-acid chain: Hydroxyethylthiazole kinase (272 aa).

Residue M62 coordinates substrate. 2 residues coordinate ATP: R138 and T183. G210 contributes to the substrate binding site.

It belongs to the Thz kinase family. Mg(2+) is required as a cofactor.

The catalysed reaction is 5-(2-hydroxyethyl)-4-methylthiazole + ATP = 4-methyl-5-(2-phosphooxyethyl)-thiazole + ADP + H(+). The protein operates within cofactor biosynthesis; thiamine diphosphate biosynthesis; 4-methyl-5-(2-phosphoethyl)-thiazole from 5-(2-hydroxyethyl)-4-methylthiazole: step 1/1. Its function is as follows. Catalyzes the phosphorylation of the hydroxyl group of 4-methyl-5-beta-hydroxyethylthiazole (THZ). The chain is Hydroxyethylthiazole kinase from Dichelobacter nodosus (strain VCS1703A).